The following is an 88-amino-acid chain: Elongation factor 1-beta (88 aa).

The protein belongs to the EF-1-beta/EF-1-delta family.

Promotes the exchange of GDP for GTP in EF-1-alpha/GDP, thus allowing the regeneration of EF-1-alpha/GTP that could then be used to form the ternary complex EF-1-alpha/GTP/AAtRNA. This chain is Elongation factor 1-beta, found in Natronomonas pharaonis (strain ATCC 35678 / DSM 2160 / CIP 103997 / JCM 8858 / NBRC 14720 / NCIMB 2260 / Gabara) (Halobacterium pharaonis).